The sequence spans 31 residues: Cyclotide mech-5 (31 aa).

Positions 1-31 (GVIPCGESCVFIPCISSVVGCTCKNKVCYRD) form a cross-link, cyclopeptide (Gly-Asp). Cystine bridges form between cysteine 5-cysteine 21, cysteine 9-cysteine 23, and cysteine 14-cysteine 28.

This is a cyclic peptide. Post-translationally, contains 3 disulfide bonds.

Functionally, probably participates in a plant defense mechanism (Potential). Binds to and induces leakage in phospholipd membranes, particularly ones containing 1-palmitoyl-2-oleophosphatidylethanolamine (POPE). This chain is Cyclotide mech-5, found in Melicytus chathamicus (Chatham Island mahoe).